The primary structure comprises 375 residues: 23S rRNA (uracil(747)-C(5))-methyltransferase RlmC (375 aa).

Positions 3, 11, 14, and 87 each coordinate [4Fe-4S] cluster. Positions 212, 241, 262, and 307 each coordinate S-adenosyl-L-methionine. C334 acts as the Nucleophile in catalysis.

This sequence belongs to the class I-like SAM-binding methyltransferase superfamily. RNA M5U methyltransferase family. RlmC subfamily.

The catalysed reaction is uridine(747) in 23S rRNA + S-adenosyl-L-methionine = 5-methyluridine(747) in 23S rRNA + S-adenosyl-L-homocysteine + H(+). Its function is as follows. Catalyzes the formation of 5-methyl-uridine at position 747 (m5U747) in 23S rRNA. This is 23S rRNA (uracil(747)-C(5))-methyltransferase RlmC from Escherichia coli (strain SMS-3-5 / SECEC).